A 267-amino-acid polypeptide reads, in one-letter code: L-aspartate dehydrogenase (267 aa).

NAD(+)-binding residues include Ala-124 and Asn-190. His-218 is an active-site residue.

The protein belongs to the L-aspartate dehydrogenase family.

It catalyses the reaction L-aspartate + NADP(+) + H2O = oxaloacetate + NH4(+) + NADPH + H(+). The enzyme catalyses L-aspartate + NAD(+) + H2O = oxaloacetate + NH4(+) + NADH + H(+). The protein operates within cofactor biosynthesis; NAD(+) biosynthesis; iminoaspartate from L-aspartate (dehydrogenase route): step 1/1. In terms of biological role, specifically catalyzes the NAD or NADP-dependent dehydrogenation of L-aspartate to iminoaspartate. In Methanocaldococcus jannaschii (strain ATCC 43067 / DSM 2661 / JAL-1 / JCM 10045 / NBRC 100440) (Methanococcus jannaschii), this protein is L-aspartate dehydrogenase.